The primary structure comprises 365 residues: Peptide chain release factor 2 (365 aa).

Gln252 is modified (N5-methylglutamine).

It belongs to the prokaryotic/mitochondrial release factor family. In terms of processing, methylated by PrmC. Methylation increases the termination efficiency of RF2.

It is found in the cytoplasm. Functionally, peptide chain release factor 2 directs the termination of translation in response to the peptide chain termination codons UGA and UAA. This is Peptide chain release factor 2 from Acidithiobacillus ferrooxidans (strain ATCC 23270 / DSM 14882 / CIP 104768 / NCIMB 8455) (Ferrobacillus ferrooxidans (strain ATCC 23270)).